The chain runs to 209 residues: Urease accessory protein UreG (209 aa).

16–23 (GPVGSGKT) serves as a coordination point for GTP.

This sequence belongs to the SIMIBI class G3E GTPase family. UreG subfamily. As to quaternary structure, homodimer. UreD, UreF and UreG form a complex that acts as a GTP-hydrolysis-dependent molecular chaperone, activating the urease apoprotein by helping to assemble the nickel containing metallocenter of UreC. The UreE protein probably delivers the nickel.

Its subcellular location is the cytoplasm. Functionally, facilitates the functional incorporation of the urease nickel metallocenter. This process requires GTP hydrolysis, probably effectuated by UreG. This Blochmanniella floridana protein is Urease accessory protein UreG.